Reading from the N-terminus, the 271-residue chain is Urease accessory protein UreD (271 aa).

This sequence belongs to the UreD family. In terms of assembly, ureD, UreF and UreG form a complex that acts as a GTP-hydrolysis-dependent molecular chaperone, activating the urease apoprotein by helping to assemble the nickel containing metallocenter of UreC. The UreE protein probably delivers the nickel.

The protein resides in the cytoplasm. Functionally, required for maturation of urease via the functional incorporation of the urease nickel metallocenter. This Actinomyces naeslundii protein is Urease accessory protein UreD.